The primary structure comprises 681 residues: UvrABC system protein B (681 aa).

The Helicase ATP-binding domain maps to 30–419; it reads QGVRDGRHWQ…GEVVELLVRP (390 aa). 43–50 is an ATP binding site; it reads GVTGSGKT. Residues 96 to 119 carry the Beta-hairpin motif; it reads YYDFYQPEAYLPSLDKYIAKDLRI. Residues 435–601 enclose the Helicase C-terminal domain; that stretch reads QIDNLLAEIR…SIVKSVDQIL (167 aa). The UVR domain maps to 641-676; the sequence is YAIVEGLRLEMQEAAEHMEYEKAAYLRDEITKMEQV.

This sequence belongs to the UvrB family. As to quaternary structure, forms a heterotetramer with UvrA during the search for lesions. Interacts with UvrC in an incision complex.

It is found in the cytoplasm. Its function is as follows. The UvrABC repair system catalyzes the recognition and processing of DNA lesions. A damage recognition complex composed of 2 UvrA and 2 UvrB subunits scans DNA for abnormalities. Upon binding of the UvrA(2)B(2) complex to a putative damaged site, the DNA wraps around one UvrB monomer. DNA wrap is dependent on ATP binding by UvrB and probably causes local melting of the DNA helix, facilitating insertion of UvrB beta-hairpin between the DNA strands. Then UvrB probes one DNA strand for the presence of a lesion. If a lesion is found the UvrA subunits dissociate and the UvrB-DNA preincision complex is formed. This complex is subsequently bound by UvrC and the second UvrB is released. If no lesion is found, the DNA wraps around the other UvrB subunit that will check the other stand for damage. The protein is UvrABC system protein B of Chlorobium chlorochromatii (strain CaD3).